The following is a 473-amino-acid chain: Cytochrome c-552 (473 aa).

Positions 1 to 33 are cleaved as a signal peptide; sequence MQHGDEMMKKMTGKSFALSALVAASFMAAGAMA. Position 93 (His93) interacts with heme c. Heme is bound by residues Cys121, Cys124, and Lys125. Positions 159, 162, 163, 201, 204, and 205 each coordinate heme c. Residues Glu207, Tyr208, Lys256, and Gln258 each coordinate Ca(2+). Tyr208 is a binding site for substrate. Substrate is bound at residue His259. His270, Cys277, Cys280, His281, His296, Cys309, Cys312, His313, and His388 together coordinate heme c.

The protein belongs to the cytochrome c-552 family. Requires Ca(2+) as cofactor. Heme c is required as a cofactor.

The protein localises to the periplasm. The enzyme catalyses 6 Fe(III)-[cytochrome c] + NH4(+) + 2 H2O = 6 Fe(II)-[cytochrome c] + nitrite + 8 H(+). Its pathway is nitrogen metabolism; nitrate reduction (assimilation). Catalyzes the reduction of nitrite to ammonia, consuming six electrons in the process. The chain is Cytochrome c-552 from Shewanella sp. (strain ANA-3).